Consider the following 576-residue polypeptide: 5'-nucleotidase (576 aa).

An N-terminal signal peptide occupies residues 1–28; the sequence is MRPAAATAPKWLLLALSALLPLWPTAKS. The Zn(2+) site is built by Asp-38 and His-40. Cys-53 and Cys-59 are joined by a disulfide. The N-linked (GlcNAc...) asparagine glycan is linked to Asn-55. Residues Asp-87, Asn-119, His-222, and His-245 each coordinate Zn(2+). N-linked (GlcNAc...) asparagine glycans are attached at residues Asn-313, Asn-335, and Asn-349. Disulfide bonds link Cys-355–Cys-360 and Cys-367–Cys-389. Arg-356 is an AMP binding site. Arg-356 is an IMP binding site. Residues Asn-392 and Arg-397 each contribute to the AMP site. Residues Asn-392 and Arg-397 each contribute to the IMP site. Asn-405 is a glycosylation site (N-linked (GlcNAc...) asparagine). Phe-419 is a binding site for AMP. Phe-419 serves as a coordination point for IMP. The cysteines at positions 478 and 481 are disulfide-linked. Positions 502 and 508 each coordinate AMP. IMP contacts are provided by Tyr-502 and Asp-508. Ser-551 is lipidated: GPI-anchor amidated serine. Positions 552–576 are cleaved as a propeptide — removed in mature form; it reads AASHYQGSFPLIILSFWAVILVLYQ.

Belongs to the 5'-nucleotidase family. As to quaternary structure, homodimer. Requires Zn(2+) as cofactor. As to expression, expressed in the brain.

Its subcellular location is the cell membrane. It catalyses the reaction a ribonucleoside 5'-phosphate + H2O = a ribonucleoside + phosphate. The enzyme catalyses a 2'-deoxyribonucleoside 5'-phosphate + H2O = a 2'-deoxyribonucleoside + phosphate. It carries out the reaction dTMP + H2O = thymidine + phosphate. The catalysed reaction is CMP + H2O = cytidine + phosphate. It catalyses the reaction IMP + H2O = inosine + phosphate. The enzyme catalyses AMP + H2O = adenosine + phosphate. It carries out the reaction GMP + H2O = guanosine + phosphate. The catalysed reaction is UMP + H2O = uridine + phosphate. It catalyses the reaction dAMP + H2O = 2'-deoxyadenosine + phosphate. The enzyme catalyses dCMP + H2O = 2'-deoxycytidine + phosphate. In terms of biological role, catalyzes the hydrolysis of nucleotide monophosphates, releasing inorganic phosphate and the corresponding nucleoside. AMP is the preferred substrate but can also hydrolyze CMP and GMP. Shows a preference for ribonucleotide monophosphates over their equivalent deoxyribose forms. Other substrates include IMP, UMP, dAMP, dCMP, dTMP, NAD and NMN. The chain is 5'-nucleotidase (Nt5e) from Rattus norvegicus (Rat).